A 320-amino-acid polypeptide reads, in one-letter code: Formimidoylglutamase (320 aa).

6 residues coordinate Mn(2+): histidine 125, aspartate 153, histidine 155, aspartate 157, aspartate 244, and aspartate 246.

This sequence belongs to the arginase family. Mn(2+) is required as a cofactor.

It carries out the reaction N-formimidoyl-L-glutamate + H2O = formamide + L-glutamate. It participates in amino-acid degradation; L-histidine degradation into L-glutamate; L-glutamate from N-formimidoyl-L-glutamate (hydrolase route): step 1/1. Functionally, catalyzes the conversion of N-formimidoyl-L-glutamate to L-glutamate and formamide. The protein is Formimidoylglutamase of Rhodococcus jostii (strain RHA1).